We begin with the raw amino-acid sequence, 536 residues long: Phosphoenolpyruvate carboxykinase (ATP) (536 aa).

Residues R62, Y203, and K209 each contribute to the substrate site. ATP-binding positions include K209, H228, and 244 to 252; that span reads GLSGTGKTT. Mn(2+) is bound by residues K209 and H228. Residue D265 coordinates Mn(2+). Residues E293, R329, 445–446, and T451 contribute to the ATP site; that span reads RI. Residue R329 participates in substrate binding.

The protein belongs to the phosphoenolpyruvate carboxykinase (ATP) family. In terms of assembly, monomer. Mn(2+) is required as a cofactor.

The protein localises to the cytoplasm. The catalysed reaction is oxaloacetate + ATP = phosphoenolpyruvate + ADP + CO2. Its pathway is carbohydrate biosynthesis; gluconeogenesis. In terms of biological role, involved in the gluconeogenesis. Catalyzes the conversion of oxaloacetate (OAA) to phosphoenolpyruvate (PEP) through direct phosphoryl transfer between the nucleoside triphosphate and OAA. The chain is Phosphoenolpyruvate carboxykinase (ATP) from Actinobacillus pleuropneumoniae serotype 5b (strain L20).